The sequence spans 396 residues: Subtilisin-like protease 5 (396 aa).

Positions 1 to 20 (MTGFFTFLSFSLAALSVTNA) are cleaved as a signal peptide. The propeptide occupies 21–116 (AHILSVPKGA…VEPDAIISQH (96 aa)). The Inhibitor I9 domain maps to 37–113 (YIVVMKDDTS…VAFVEPDAII (77 aa)). An N-linked (GlcNAc...) asparagine glycan is attached at Asn-63. The region spanning 125–396 (PWGLSRLSNR…SRLLYNGSGR (272 aa)) is the Peptidase S8 domain. Catalysis depends on charge relay system residues Asp-156 and His-187. 2 N-linked (GlcNAc...) asparagine glycosylation sites follow: Asn-230 and Asn-248. Ser-342 serves as the catalytic Charge relay system. Residues 376 to 389 (PTIRNPGPDTTSRL) are compositionally biased toward polar residues. Positions 376 to 396 (PTIRNPGPDTTSRLLYNGSGR) are disordered. Asn-392 carries an N-linked (GlcNAc...) asparagine glycan.

Belongs to the peptidase S8 family.

Its subcellular location is the secreted. In terms of biological role, secreted subtilisin-like serine protease with keratinolytic activity that contributes to pathogenicity. The sequence is that of Subtilisin-like protease 5 (SUB5) from Trichophyton tonsurans (Scalp ringworm fungus).